We begin with the raw amino-acid sequence, 39 residues long: Photosystem II reaction center protein J (39 aa).

A helical transmembrane segment spans residues 9–29 (LWLVATVGGMAAITVLGIFIY).

Belongs to the PsbJ family. In terms of assembly, PSII is composed of 1 copy each of membrane proteins PsbA, PsbB, PsbC, PsbD, PsbE, PsbF, PsbH, PsbI, PsbJ, PsbK, PsbL, PsbM, PsbT, PsbX, PsbY, PsbZ, Psb30/Ycf12, at least 3 peripheral proteins of the oxygen-evolving complex and a large number of cofactors. It forms dimeric complexes.

Its subcellular location is the plastid. It localises to the chloroplast thylakoid membrane. One of the components of the core complex of photosystem II (PSII). PSII is a light-driven water:plastoquinone oxidoreductase that uses light energy to abstract electrons from H(2)O, generating O(2) and a proton gradient subsequently used for ATP formation. It consists of a core antenna complex that captures photons, and an electron transfer chain that converts photonic excitation into a charge separation. The sequence is that of Photosystem II reaction center protein J from Porphyra purpurea (Red seaweed).